A 312-amino-acid chain; its full sequence is Cytochrome c biogenesis protein CcsA (312 aa).

The next 8 membrane-spanning stretches (helical) occupy residues 9–29 (ILTH…LITF), 44–64 (GIIV…ISSG), 71–91 (LYES…IPYF), 111–131 (GFAT…VPAL), 143–163 (MILG…LLVI), 216–236 (VISL…VWAN), 251–271 (WAFI…NINL), and 277–297 (AIIA…VNLL).

The protein belongs to the CcmF/CycK/Ccl1/NrfE/CcsA family. In terms of assembly, may interact with Ccs1.

Its subcellular location is the plastid. The protein localises to the chloroplast thylakoid membrane. In terms of biological role, required during biogenesis of c-type cytochromes (cytochrome c6 and cytochrome f) at the step of heme attachment. This is Cytochrome c biogenesis protein CcsA from Atropa belladonna (Belladonna).